Reading from the N-terminus, the 369-residue chain is Peptide chain release factor 2 (369 aa).

Glutamine 252 is modified (N5-methylglutamine).

This sequence belongs to the prokaryotic/mitochondrial release factor family. Methylated by PrmC. Methylation increases the termination efficiency of RF2.

The protein resides in the cytoplasm. Functionally, peptide chain release factor 2 directs the termination of translation in response to the peptide chain termination codons UGA and UAA. The polypeptide is Peptide chain release factor 2 (Staphylococcus aureus (strain bovine RF122 / ET3-1)).